The chain runs to 165 residues: NADPH-dependent 7-cyano-7-deazaguanine reductase (165 aa).

Residue C56 is the Thioimide intermediate of the active site. The active-site Proton donor is D63. Residues 78–80 (VES) and 97–98 (HE) contribute to the substrate site.

The protein belongs to the GTP cyclohydrolase I family. QueF type 1 subfamily.

It is found in the cytoplasm. It catalyses the reaction 7-aminomethyl-7-carbaguanine + 2 NADP(+) = 7-cyano-7-deazaguanine + 2 NADPH + 3 H(+). The protein operates within tRNA modification; tRNA-queuosine biosynthesis. Its function is as follows. Catalyzes the NADPH-dependent reduction of 7-cyano-7-deazaguanine (preQ0) to 7-aminomethyl-7-deazaguanine (preQ1). The chain is NADPH-dependent 7-cyano-7-deazaguanine reductase from Bacillus cereus (strain ATCC 14579 / DSM 31 / CCUG 7414 / JCM 2152 / NBRC 15305 / NCIMB 9373 / NCTC 2599 / NRRL B-3711).